A 277-amino-acid polypeptide reads, in one-letter code: Uridine phosphorylase (277 aa).

Belongs to the PNP/UDP phosphorylase family.

Its subcellular location is the cytoplasm. The enzyme catalyses uridine + phosphate = alpha-D-ribose 1-phosphate + uracil. Its pathway is pyrimidine metabolism; UMP biosynthesis via salvage pathway; uracil from uridine (phosphorylase route): step 1/1. Catalyzes the reversible phosphorylytic cleavage of uridine to uracil and ribose-1-phosphate. This chain is Uridine phosphorylase, found in Thermococcus kodakarensis (strain ATCC BAA-918 / JCM 12380 / KOD1) (Pyrococcus kodakaraensis (strain KOD1)).